The following is a 165-amino-acid chain: MAPEENAGTELLLQSLERRFLAARALRSFPWQSLEAKLRDSSDSELLRDILQKHEAVHTEPLDELYEVLAETLMAKESTQGHRSYLLTCCIAQKPSCRWSGSCGGWLPAGSTSGLLKSMWPLPSATQRRASCSPLSYAGLGSDGKWNLVMTRNCFPTKSTWRWQC.

The protein belongs to the class I-like SAM-binding methyltransferase superfamily. EEF2KMT family.

The polypeptide is Putative protein FAM86C2P (FAM86C2P) (Homo sapiens (Human)).